A 510-amino-acid chain; its full sequence is Maturase K (510 aa).

This sequence belongs to the intron maturase 2 family. MatK subfamily.

It localises to the plastid. Functionally, usually encoded in the trnK tRNA gene intron. Probably assists in splicing its own and other chloroplast group II introns. The polypeptide is Maturase K (Bartsia alpina (Velvet bells)).